Here is a 101-residue protein sequence, read N- to C-terminus: Small ribosomal subunit protein uS14 (101 aa).

The protein belongs to the universal ribosomal protein uS14 family. In terms of assembly, part of the 30S ribosomal subunit. Contacts proteins S3 and S10.

In terms of biological role, binds 16S rRNA, required for the assembly of 30S particles and may also be responsible for determining the conformation of the 16S rRNA at the A site. The chain is Small ribosomal subunit protein uS14 from Haemophilus influenzae (strain 86-028NP).